A 508-amino-acid polypeptide reads, in one-letter code: MILVLDFGSQYTQLIARRLRESGIYAEIVPFFESVENIQKKAPKGLILSGGPASVYAKDAYKPSEKIFDLNLPILGICYGMQYLVDFFGGVVAYANEQEFGKAILEIVQNSVIFEGVKIKSLVWMSHMDKVIELPKGFTTLAKSPNSPYCAIESDKIFGLQFHPEVIQSEEGGKILENFALLVCGCEKTWGMQHFAQREIVRLKEKIANAKVLCAVSGGVDSTVVATLLHRAIKDNLIAVFVDHGLLRKNEKEKVQAMFKDLQIPLNTIDAKEVFLSKLKGVSEPELKRKIIGETFIEVFEKEAKKHHLKGKIEFLAQGTLYPDVIESVSVKGPSKVIKTHHNVGGLPEWMDFKLIEPLRELFKDEVRLLGKELGVSQDFLMRHPFPGPGLAIRILGEINENKIKRLQEADAIFIEELKKANLYDKVWQAFCVLLNVNSVGVMGDNRTYENAICLRAVNASDGMTASFSFLEHSFLEKVSNRITNEVNGINRVVYDITSKPPGTIEWE.

Residues 1 to 189 (MILVLDFGSQ…ALLVCGCEKT (189 aa)) enclose the Glutamine amidotransferase type-1 domain. Cys-78 (nucleophile) is an active-site residue. Residues His-163 and Glu-165 contribute to the active site. A GMPS ATP-PPase domain is found at 190-383 (WGMQHFAQRE…LGVSQDFLMR (194 aa)). 217–223 (SGGVDST) contacts ATP.

In terms of assembly, homodimer.

The catalysed reaction is XMP + L-glutamine + ATP + H2O = GMP + L-glutamate + AMP + diphosphate + 2 H(+). Its pathway is purine metabolism; GMP biosynthesis; GMP from XMP (L-Gln route): step 1/1. Its function is as follows. Catalyzes the synthesis of GMP from XMP. The sequence is that of GMP synthase [glutamine-hydrolyzing] (guaA) from Helicobacter pylori (strain J99 / ATCC 700824) (Campylobacter pylori J99).